The following is a 432-amino-acid chain: Enolase (432 aa).

(2R)-2-phosphoglycerate is bound at residue Q167. The active-site Proton donor is the E209. D246, E290, and D317 together coordinate Mg(2+). (2R)-2-phosphoglycerate-binding residues include K342, R371, S372, and K393. K342 serves as the catalytic Proton acceptor.

Belongs to the enolase family. In terms of assembly, component of the RNA degradosome, a multiprotein complex involved in RNA processing and mRNA degradation. Mg(2+) is required as a cofactor.

Its subcellular location is the cytoplasm. It localises to the secreted. The protein localises to the cell surface. The catalysed reaction is (2R)-2-phosphoglycerate = phosphoenolpyruvate + H2O. Its pathway is carbohydrate degradation; glycolysis; pyruvate from D-glyceraldehyde 3-phosphate: step 4/5. In terms of biological role, catalyzes the reversible conversion of 2-phosphoglycerate (2-PG) into phosphoenolpyruvate (PEP). It is essential for the degradation of carbohydrates via glycolysis. In Cronobacter sakazakii (strain ATCC BAA-894) (Enterobacter sakazakii), this protein is Enolase.